Here is a 306-residue protein sequence, read N- to C-terminus: MTSTRHDGDTWDLASSVGATATMAAVARAIATRADRRLIDDPFAAPLVRAVGIDLLTRLATGDVPPDGLVEQVAIDVAKVRARFYDEFFLEATNTGITQVVILASGLDSRAYRLPWPIGTVVYELDQPRVVEFKTRTLAALGAVPTADRRVAAVDLRDDWPAALRAAGFDPARPTAWSAEGLLGYLPPEAQDRLLDTVTELSAPESRVATENRPNPKPGDEDRTKEALNRISERWRAHSFDPDMARLRYYGERNETAPYLADRGWALTGISVRDLLAAHGLPPLRDDDLRMGDVRYVSGVRNKTTK.

S-adenosyl-L-methionine contacts are provided by residues D126 and 155 to 156 (DL). The segment at 201-225 (LSAPESRVATENRPNPKPGDEDRTK) is disordered.

This sequence belongs to the UPF0677 family.

Functionally, exhibits S-adenosyl-L-methionine-dependent methyltransferase activity. This Frankia alni (strain DSM 45986 / CECT 9034 / ACN14a) protein is Putative S-adenosyl-L-methionine-dependent methyltransferase FRAAL5401.